The sequence spans 1383 residues: DNA-directed RNA polymerase subunit beta (1383 aa).

Belongs to the RNA polymerase beta chain family. The RNAP catalytic core consists of 2 alpha, 1 beta, 1 beta' and 1 omega subunit. When a sigma factor is associated with the core the holoenzyme is formed, which can initiate transcription.

It catalyses the reaction RNA(n) + a ribonucleoside 5'-triphosphate = RNA(n+1) + diphosphate. Functionally, DNA-dependent RNA polymerase catalyzes the transcription of DNA into RNA using the four ribonucleoside triphosphates as substrates. In Anaplasma phagocytophilum (strain HZ), this protein is DNA-directed RNA polymerase subunit beta.